The primary structure comprises 151 residues: MSRIEEITKELVMPILEENNFELVDVEYKKEGKHWYLRVYIDKEGGITLDDCQLVSEYLSDRLDEVDPIDHSYILEVSSPGLDRPLKTPRDFKRNLGKEVEVSLYQPIDKRKKFTGELLEFTGDKIILLCEGEKREFEMKNVRLVKPVIKF.

The protein belongs to the RimP family.

The protein localises to the cytoplasm. Required for maturation of 30S ribosomal subunits. This chain is Ribosome maturation factor RimP, found in Caldanaerobacter subterraneus subsp. tengcongensis (strain DSM 15242 / JCM 11007 / NBRC 100824 / MB4) (Thermoanaerobacter tengcongensis).